Here is a 290-residue protein sequence, read N- to C-terminus: Lipoyl synthase (290 aa).

Cysteine 34, cysteine 39, cysteine 45, cysteine 60, cysteine 64, cysteine 67, and serine 273 together coordinate [4Fe-4S] cluster. The Radical SAM core domain occupies 46-262; that stretch reads WNKRHATVMI…KYIAYSKGFL (217 aa).

The protein belongs to the radical SAM superfamily. Lipoyl synthase family. It depends on [4Fe-4S] cluster as a cofactor.

The protein localises to the cytoplasm. It carries out the reaction [[Fe-S] cluster scaffold protein carrying a second [4Fe-4S](2+) cluster] + N(6)-octanoyl-L-lysyl-[protein] + 2 oxidized [2Fe-2S]-[ferredoxin] + 2 S-adenosyl-L-methionine + 4 H(+) = [[Fe-S] cluster scaffold protein] + N(6)-[(R)-dihydrolipoyl]-L-lysyl-[protein] + 4 Fe(3+) + 2 hydrogen sulfide + 2 5'-deoxyadenosine + 2 L-methionine + 2 reduced [2Fe-2S]-[ferredoxin]. Its pathway is protein modification; protein lipoylation via endogenous pathway; protein N(6)-(lipoyl)lysine from octanoyl-[acyl-carrier-protein]: step 2/2. In terms of biological role, catalyzes the radical-mediated insertion of two sulfur atoms into the C-6 and C-8 positions of the octanoyl moiety bound to the lipoyl domains of lipoate-dependent enzymes, thereby converting the octanoylated domains into lipoylated derivatives. This chain is Lipoyl synthase, found in Wolbachia pipientis subsp. Culex pipiens (strain wPip).